A 469-amino-acid chain; its full sequence is UDP-N-acetylmuramate--L-alanine ligase (469 aa).

112 to 118 (GTHGKTT) provides a ligand contact to ATP.

It belongs to the MurCDEF family.

The protein resides in the cytoplasm. The enzyme catalyses UDP-N-acetyl-alpha-D-muramate + L-alanine + ATP = UDP-N-acetyl-alpha-D-muramoyl-L-alanine + ADP + phosphate + H(+). It participates in cell wall biogenesis; peptidoglycan biosynthesis. Its function is as follows. Cell wall formation. In Methylibium petroleiphilum (strain ATCC BAA-1232 / LMG 22953 / PM1), this protein is UDP-N-acetylmuramate--L-alanine ligase.